Here is a 165-residue protein sequence, read N- to C-terminus: Large ribosomal subunit protein uL30 (165 aa).

This sequence belongs to the universal ribosomal protein uL30 family. As to quaternary structure, part of the 50S ribosomal subunit.

This Thermoplasma acidophilum (strain ATCC 25905 / DSM 1728 / JCM 9062 / NBRC 15155 / AMRC-C165) protein is Large ribosomal subunit protein uL30.